Reading from the N-terminus, the 478-residue chain is Adenylosuccinate lyase (478 aa).

Substrate is bound by residues 14 to 15 (RY), 81 to 83 (KHD), and 107 to 108 (TS). H155 functions as the Proton donor/acceptor in the catalytic mechanism. Position 237 (Q237) interacts with substrate. The active-site Proton donor/acceptor is S285. Residues R299, R325, S330, and R334 each coordinate substrate.

Belongs to the lyase 1 family. Adenylosuccinate lyase subfamily. As to quaternary structure, homotetramer. Residues from neighboring subunits contribute catalytic and substrate-binding residues to each active site.

The enzyme catalyses N(6)-(1,2-dicarboxyethyl)-AMP = fumarate + AMP. It catalyses the reaction (2S)-2-[5-amino-1-(5-phospho-beta-D-ribosyl)imidazole-4-carboxamido]succinate = 5-amino-1-(5-phospho-beta-D-ribosyl)imidazole-4-carboxamide + fumarate. It participates in purine metabolism; AMP biosynthesis via de novo pathway; AMP from IMP: step 2/2. It functions in the pathway purine metabolism; IMP biosynthesis via de novo pathway; 5-amino-1-(5-phospho-D-ribosyl)imidazole-4-carboxamide from 5-amino-1-(5-phospho-D-ribosyl)imidazole-4-carboxylate: step 2/2. Catalyzes two non-sequential steps in de novo AMP synthesis: converts (S)-2-(5-amino-1-(5-phospho-D-ribosyl)imidazole-4-carboxamido)succinate (SAICAR) to fumarate plus 5-amino-1-(5-phospho-D-ribosyl)imidazole-4-carboxamide, and thereby also contributes to de novo IMP synthesis, and converts succinyladenosine monophosphate (SAMP) to AMP and fumarate. This chain is Adenylosuccinate lyase, found in Caenorhabditis briggsae.